Consider the following 88-residue polypeptide: Small ribosomal subunit protein uS17 (88 aa).

It belongs to the universal ribosomal protein uS17 family. As to quaternary structure, part of the 30S ribosomal subunit.

Its function is as follows. One of the primary rRNA binding proteins, it binds specifically to the 5'-end of 16S ribosomal RNA. In Hahella chejuensis (strain KCTC 2396), this protein is Small ribosomal subunit protein uS17.